The chain runs to 388 residues: Phosphopentomutase (388 aa).

Residues Asp-9, Asp-283, His-288, Asp-324, His-325, and His-336 each coordinate Mn(2+).

This sequence belongs to the phosphopentomutase family. Mn(2+) is required as a cofactor.

The protein localises to the cytoplasm. The enzyme catalyses 2-deoxy-alpha-D-ribose 1-phosphate = 2-deoxy-D-ribose 5-phosphate. The catalysed reaction is alpha-D-ribose 1-phosphate = D-ribose 5-phosphate. It participates in carbohydrate degradation; 2-deoxy-D-ribose 1-phosphate degradation; D-glyceraldehyde 3-phosphate and acetaldehyde from 2-deoxy-alpha-D-ribose 1-phosphate: step 1/2. In terms of biological role, isomerase that catalyzes the conversion of deoxy-ribose 1-phosphate (dRib-1-P) and ribose 1-phosphate (Rib-1-P) to deoxy-ribose 5-phosphate (dRib-5-P) and ribose 5-phosphate (Rib-5-P), respectively. The protein is Phosphopentomutase of Deinococcus radiodurans (strain ATCC 13939 / DSM 20539 / JCM 16871 / CCUG 27074 / LMG 4051 / NBRC 15346 / NCIMB 9279 / VKM B-1422 / R1).